Here is a 157-residue protein sequence, read N- to C-terminus: MGFPKVERLLINYKTLDEFKKFKGCGAQELSMLEELQANIIENDSESPFYGIYYGGSLIARMSLYMKRNGGEPFEITGTYLELYKLEVLPTFQKQGFGQMLVNYAKQLQFPIKTIARIQSSGFWDKLSFQPVSVTDGDFYIWHPETNSNAITNEESA.

The N-acetyltransferase domain occupies 9 to 154 (LLINYKTLDE…ETNSNAITNE (146 aa)).

This is an uncharacterized protein from Bacillus mycoides (strain KBAB4) (Bacillus weihenstephanensis).